The chain runs to 316 residues: Beta-ketoacyl-[acyl-carrier-protein] synthase III (316 aa).

Residues cysteine 112 and histidine 243 contribute to the active site. Residues 244–248 (QANLR) form an ACP-binding region. Asparagine 273 is a catalytic residue.

It belongs to the thiolase-like superfamily. FabH family. Homodimer.

Its subcellular location is the cytoplasm. It catalyses the reaction malonyl-[ACP] + acetyl-CoA + H(+) = 3-oxobutanoyl-[ACP] + CO2 + CoA. It functions in the pathway lipid metabolism; fatty acid biosynthesis. Catalyzes the condensation reaction of fatty acid synthesis by the addition to an acyl acceptor of two carbons from malonyl-ACP. Catalyzes the first condensation reaction which initiates fatty acid synthesis and may therefore play a role in governing the total rate of fatty acid production. Possesses both acetoacetyl-ACP synthase and acetyl transacylase activities. Its substrate specificity determines the biosynthesis of branched-chain and/or straight-chain of fatty acids. The chain is Beta-ketoacyl-[acyl-carrier-protein] synthase III from Histophilus somni (strain 2336) (Haemophilus somnus).